The primary structure comprises 426 residues: Glutamate/glutamine/aspartate/asparagine transport system permease protein BztB (426 aa).

8 helical membrane passes run serine 25–asparagine 45, leucine 96–leucine 116, valine 132–alanine 152, leucine 211–tryptophan 231, tryptophan 252–phenylalanine 272, serine 293–valine 313, serine 340–leucine 360, and methionine 396–leucine 416. An ABC transmembrane type-1 domain is found at leucine 92–methionine 414.

This sequence belongs to the binding-protein-dependent transport system permease family. HisMQ subfamily. As to quaternary structure, bztB and BztC form a heterodimer which can form a membrane complex with a homodimer of BztD.

It is found in the cell inner membrane. Part of a binding-protein-dependent transport system for glutamate, glutamine, aspartate and asparagine. Probably responsible for the translocation of the substrate across the membrane. The chain is Glutamate/glutamine/aspartate/asparagine transport system permease protein BztB (bztB) from Rhodobacter capsulatus (strain ATCC BAA-309 / NBRC 16581 / SB1003).